A 363-amino-acid polypeptide reads, in one-letter code: tRNA(Met) cytidine acetate ligase (363 aa).

ATP-binding positions include 7–20, glycine 96, asparagine 152, and arginine 175; that span reads IAEF…HKYL.

Belongs to the TmcAL family.

The protein resides in the cytoplasm. The catalysed reaction is cytidine(34) in elongator tRNA(Met) + acetate + ATP = N(4)-acetylcytidine(34) in elongator tRNA(Met) + AMP + diphosphate. In terms of biological role, catalyzes the formation of N(4)-acetylcytidine (ac(4)C) at the wobble position of elongator tRNA(Met), using acetate and ATP as substrates. First activates an acetate ion to form acetyladenylate (Ac-AMP) and then transfers the acetyl group to tRNA to form ac(4)C34. This chain is tRNA(Met) cytidine acetate ligase, found in Streptococcus thermophilus (strain CNRZ 1066).